Reading from the N-terminus, the 386-residue chain is Inactive GDSL esterase/lipase-like protein 23 (386 aa).

An N-terminal signal peptide occupies residues 1–29; that stretch reads MMAKNCNLVSVLCVFLVLTLFNKPITVAG. S43 functions as the Nucleophile in the catalytic mechanism. N-linked (GlcNAc...) asparagine glycosylation is found at N105, N165, and N288. Catalysis depends on residues D322 and H325.

It belongs to the 'GDSL' lipolytic enzyme family. In terms of assembly, part of the PYK10 complex. Interacts with MVP1. As to expression, expressed mainly in roots.

It is found in the endoplasmic reticulum. In terms of biological role, involved in the control of the PYK10 complex size and possibly substrate specificity. May be exported from the endoplasmic reticulum upon interaction with MVP1. This is Inactive GDSL esterase/lipase-like protein 23 (GLL23) from Arabidopsis thaliana (Mouse-ear cress).